The sequence spans 262 residues: Pyridoxine 5'-phosphate synthase (262 aa).

Residue asparagine 6 coordinates 3-amino-2-oxopropyl phosphate. 8–9 (DH) serves as a coordination point for 1-deoxy-D-xylulose 5-phosphate. A 3-amino-2-oxopropyl phosphate-binding site is contributed by arginine 17. Histidine 43 serves as the catalytic Proton acceptor. 1-deoxy-D-xylulose 5-phosphate is bound by residues arginine 45 and histidine 50. Glutamate 70 functions as the Proton acceptor in the catalytic mechanism. A 1-deoxy-D-xylulose 5-phosphate-binding site is contributed by threonine 102. Residue histidine 215 is the Proton donor of the active site. 3-amino-2-oxopropyl phosphate contacts are provided by residues glycine 216 and 237–238 (GH).

The protein belongs to the PNP synthase family. Homooctamer; tetramer of dimers.

It localises to the cytoplasm. The catalysed reaction is 3-amino-2-oxopropyl phosphate + 1-deoxy-D-xylulose 5-phosphate = pyridoxine 5'-phosphate + phosphate + 2 H2O + H(+). It participates in cofactor biosynthesis; pyridoxine 5'-phosphate biosynthesis; pyridoxine 5'-phosphate from D-erythrose 4-phosphate: step 5/5. In terms of biological role, catalyzes the complicated ring closure reaction between the two acyclic compounds 1-deoxy-D-xylulose-5-phosphate (DXP) and 3-amino-2-oxopropyl phosphate (1-amino-acetone-3-phosphate or AAP) to form pyridoxine 5'-phosphate (PNP) and inorganic phosphate. The protein is Pyridoxine 5'-phosphate synthase of Helicobacter pylori (strain J99 / ATCC 700824) (Campylobacter pylori J99).